The following is a 429-amino-acid chain: Phosphoribosylamine--glycine ligase (429 aa).

An ATP-grasp domain is found at 109–316 (KDFLARHQIP…LVDLCLAAID (208 aa)). Position 135-196 (135-196 (VREQGAPIVV…EEFLDGEEAS (62 aa))) interacts with ATP. Residues 212–235 (SQDHKRVGDKDTGPNTGGMGAYSP) form a disordered region. A compositionally biased stretch (basic and acidic residues) spans 213-223 (QDHKRVGDKDT). Mg(2+)-binding residues include glutamate 286 and asparagine 288.

The protein belongs to the GARS family. Mg(2+) is required as a cofactor. It depends on Mn(2+) as a cofactor.

It carries out the reaction 5-phospho-beta-D-ribosylamine + glycine + ATP = N(1)-(5-phospho-beta-D-ribosyl)glycinamide + ADP + phosphate + H(+). Its pathway is purine metabolism; IMP biosynthesis via de novo pathway; N(1)-(5-phospho-D-ribosyl)glycinamide from 5-phospho-alpha-D-ribose 1-diphosphate: step 2/2. In Vibrio parahaemolyticus serotype O3:K6 (strain RIMD 2210633), this protein is Phosphoribosylamine--glycine ligase.